Consider the following 210-residue polypeptide: Meiotic coiled-coil protein 7 (210 aa).

Residues 77–148 are a coiled coil; that stretch reads KRSRESVLGS…LKTQLSNLNH (72 aa).

Belongs to the MND1 family. Interacts with meu13.

It is found in the cytoplasm. The protein resides in the nucleus. Functionally, required for meiotic recombination. This chain is Meiotic coiled-coil protein 7 (mcp7), found in Schizosaccharomyces pombe (strain 972 / ATCC 24843) (Fission yeast).